Here is a 314-residue protein sequence, read N- to C-terminus: Ribosomal protein L11 methyltransferase (314 aa).

S-adenosyl-L-methionine-binding residues include Thr161, Gly182, Asp204, and Asn248.

This sequence belongs to the methyltransferase superfamily. PrmA family.

The protein resides in the cytoplasm. The enzyme catalyses L-lysyl-[protein] + 3 S-adenosyl-L-methionine = N(6),N(6),N(6)-trimethyl-L-lysyl-[protein] + 3 S-adenosyl-L-homocysteine + 3 H(+). Its function is as follows. Methylates ribosomal protein L11. This is Ribosomal protein L11 methyltransferase from Listeria welshimeri serovar 6b (strain ATCC 35897 / DSM 20650 / CCUG 15529 / CIP 8149 / NCTC 11857 / SLCC 5334 / V8).